Reading from the N-terminus, the 380-residue chain is Probable protein phosphatase 2C 2 (380 aa).

Positions 69 to 339 constitute a PPM-type phosphatase domain; sequence RSGSFADIGP…DNLTVIVICF (271 aa). 4 residues coordinate Mn(2+): Asp113, Gly114, Asp287, and Asp330.

It belongs to the PP2C family. The cofactor is Mg(2+). Mn(2+) is required as a cofactor.

It catalyses the reaction O-phospho-L-seryl-[protein] + H2O = L-seryl-[protein] + phosphate. It carries out the reaction O-phospho-L-threonyl-[protein] + H2O = L-threonyl-[protein] + phosphate. The protein is Probable protein phosphatase 2C 2 of Oryza sativa subsp. japonica (Rice).